The sequence spans 196 residues: Orotate phosphoribosyltransferase (196 aa).

Residue 117–125 participates in 5-phospho-alpha-D-ribose 1-diphosphate binding; the sequence is EDVVTTGLS. Orotate is bound by residues threonine 121 and arginine 149.

The protein belongs to the purine/pyrimidine phosphoribosyltransferase family. PyrE subfamily. In terms of assembly, homodimer. Mg(2+) serves as cofactor.

The enzyme catalyses orotidine 5'-phosphate + diphosphate = orotate + 5-phospho-alpha-D-ribose 1-diphosphate. The protein operates within pyrimidine metabolism; UMP biosynthesis via de novo pathway; UMP from orotate: step 1/2. Functionally, catalyzes the transfer of a ribosyl phosphate group from 5-phosphoribose 1-diphosphate to orotate, leading to the formation of orotidine monophosphate (OMP). This Sphingopyxis alaskensis (strain DSM 13593 / LMG 18877 / RB2256) (Sphingomonas alaskensis) protein is Orotate phosphoribosyltransferase.